We begin with the raw amino-acid sequence, 377 residues long: Benzylmalonyl-CoA dehydrogenase (377 aa).

FAD-binding positions include 123–132 (ICMTEPNAGS), 156–158 (WIT), Arg266, Gln277, and 363–365 (TSE).

Belongs to the acyl-CoA dehydrogenase family. In terms of assembly, homotetramer. It depends on FAD as a cofactor.

The enzyme catalyses (2-aminobenzyl)malonyl-CoA + O2 + H(+) = (E)-2-aminocinnamoyl-CoA + H2O2 + CO2. It catalyses the reaction benzylmalonyl-CoA + O2 + H(+) = (E)-cinnamoyl-CoA + H2O2 + CO2. Involved in degradation of indoleacetate, the most common member of the auxin class of plant hormones. Catalyzes the irreversible oxidative decarboxylation of (2-aminobenzyl)malonyl-CoA to 2-aminocinnamoyl-CoA and CO(2). In vitro, shows high catalytic efficiency with benzylmalonyl-CoA, a chemical analog of the physiological substrate, but otherwise accepts only a few medium-chain alkylmalonyl-CoA compounds as alternative substrates with low activities. The protein is Benzylmalonyl-CoA dehydrogenase of Aromatoleum aromaticum (strain DSM 19018 / LMG 30748 / EbN1) (Azoarcus sp. (strain EbN1)).